Consider the following 1470-residue polypeptide: ABC transporter G family member 48 (1470 aa).

A disordered region spans residues 1 to 47; it reads MAAAPSASGRRSMSWGSSISQSFRQAEADDPFGRAASQQGHDDDEEN. The segment covering 9–24 has biased composition (polar residues); it reads GRRSMSWGSSISQSFR. Residues 172–445 form the ABC transporter 1 domain; sequence GLIGRFGSSN…FENAGFRCPE (274 aa). An ATP-binding site is contributed by 205-212; that stretch reads GPPSSGKS. An ABC transmembrane type-2 1 domain is found at 523-736; that stretch reads ESLRAVMSRE…SQQAISINEF (214 aa). 6 helical membrane-spanning segments follow: residues 541-561, 577-597, 629-649, 660-680, 686-706, and 772-792; these read FIYIFKVTQLIILAFMSMTVF, FLGALTFSLITILFNGFAELQ, VPVSLVEAAVWVVLTYYVMGF, FIAFFVTHQMAMAMFRFLGAI, VANTFGMFVLLIVFIFGGFLI, and FWISIGALIGFLVVFNILYIL. Positions 828 to 852 are disordered; that stretch reads QIVHNNGASNTSATSSIPMSGSRST. Residues 832–843 are compositionally biased toward low complexity; sequence NNGASNTSATSS. Positions 869–1121 constitute an ABC transporter 2 domain; the sequence is LCFNHVNYYV…KLVEYFEAVP (253 aa). 914-921 contributes to the ATP binding site; the sequence is GVSGAGKT. Residues 1194-1408 form the ABC transmembrane type-2 2 domain; the sequence is SQCIANFWKQ…TIYGVVASQF (215 aa). 7 helical membrane passes run 1215 to 1234, 1249 to 1271, 1301 to 1321, 1331 to 1351, 1359 to 1379, 1389 to 1409, and 1439 to 1459; these read AMRYLMTLLNGLVFGTVFWQ, LGATYAATFFLGAANCITVQPVV, VIYNILQGILYTIIIYAMIGY, FMFFIVASFNYFTLFGMMLVA, ANILISFVLPLWNLFAGFLVV, WYYWANPVSWTIYGVVASQFG, and FLGYVVLTHFGYIIVFFFIFG.

The protein belongs to the ABC transporter superfamily. ABCG family. PDR (TC 3.A.1.205) subfamily.

Its subcellular location is the membrane. Functionally, may be a general defense protein. The polypeptide is ABC transporter G family member 48 (Oryza sativa subsp. japonica (Rice)).